Reading from the N-terminus, the 412-residue chain is Serine hydroxymethyltransferase (412 aa).

(6S)-5,6,7,8-tetrahydrofolate-binding positions include Leu-125 and 129 to 131 (GHL). Lys-234 is subject to N6-(pyridoxal phosphate)lysine. Glu-250 contributes to the (6S)-5,6,7,8-tetrahydrofolate binding site.

The protein belongs to the SHMT family. In terms of assembly, homodimer. It depends on pyridoxal 5'-phosphate as a cofactor.

The protein resides in the cytoplasm. It carries out the reaction (6R)-5,10-methylene-5,6,7,8-tetrahydrofolate + glycine + H2O = (6S)-5,6,7,8-tetrahydrofolate + L-serine. The protein operates within one-carbon metabolism; tetrahydrofolate interconversion. It functions in the pathway amino-acid biosynthesis; glycine biosynthesis; glycine from L-serine: step 1/1. Its function is as follows. Catalyzes the reversible interconversion of serine and glycine with tetrahydrofolate (THF) serving as the one-carbon carrier. This reaction serves as the major source of one-carbon groups required for the biosynthesis of purines, thymidylate, methionine, and other important biomolecules. Also exhibits THF-independent aldolase activity toward beta-hydroxyamino acids, producing glycine and aldehydes, via a retro-aldol mechanism. The sequence is that of Serine hydroxymethyltransferase from Deinococcus geothermalis (strain DSM 11300 / CIP 105573 / AG-3a).